Consider the following 504-residue polypeptide: Subtilisin-like protease 1 (504 aa).

Residues 1-19 (MGVFRFISISLAAVSAANA) form the signal peptide. The propeptide occupies 20–116 (AQILSMPHAQ…VEPDTIVSVH (97 aa)). Residues 34 to 116 (SYIVMMKDDT…VEPDTIVSVH (83 aa)) enclose the Inhibitor I9 domain. The Peptidase S8 domain occupies 126 to 400 (SWGLARISNP…NVLINNGGAK (275 aa)). Active-site charge relay system residues include D158 and H190. The tract at residues 172-198 (AIWGSNQVNDGDDRDGSGHGTHTSGTM) is disordered. N233 and N251 each carry an N-linked (GlcNAc...) asparagine glycan. The span at 282–294 (NDNQDAQSSSPAS) shows a compositional bias: polar residues. The interval 282–312 (NDNQDAQSSSPASEPSVCTVGSSAEDDSRSS) is disordered. The active-site Charge relay system is the S345. Polar residues predominate over residues 378-394 (TSSITDAGPGTPTNVLI). A disordered region spans residues 378–483 (TSSITDAGPG…YPGGDNFDFD (106 aa)). 2 stretches are compositionally biased toward pro residues: residues 405-449 (NPNP…PGQP) and 457-473 (APAP…PHTP).

Belongs to the peptidase S8 family.

The protein resides in the secreted. Its function is as follows. Secreted subtilisin-like serine protease with keratinolytic activity that contributes to pathogenicity. This chain is Subtilisin-like protease 1 (SUB1), found in Trichophyton rubrum (Athlete's foot fungus).